The primary structure comprises 189 residues: MVKVIASSVRKGNVLDVDGKLYVVLTAQNFHPGKGTPVTQVDMRRIVDGTKVSERWRTTEQVERAFVEDLNFQFLYEDGEGFHFMNPENYDQVVVDVETMGDQKAYLQEGMTCVLSIHEGNPLAVELPRHVTLEIVETEPVVKGQTASSSYKPAILSNGIRTMVPPHIDAGIRVVIATEDNSYVERAKN.

This sequence belongs to the elongation factor P family.

It is found in the cytoplasm. The protein operates within protein biosynthesis; polypeptide chain elongation. Functionally, involved in peptide bond synthesis. Stimulates efficient translation and peptide-bond synthesis on native or reconstituted 70S ribosomes in vitro. Probably functions indirectly by altering the affinity of the ribosome for aminoacyl-tRNA, thus increasing their reactivity as acceptors for peptidyl transferase. The polypeptide is Elongation factor P (Rhizobium radiobacter (Agrobacterium tumefaciens)).